Here is a 256-residue protein sequence, read N- to C-terminus: Probable aquaporin TIP-type alpha (256 aa).

Residues 1-24 (MATRRYSFGRTDEATHPDSMRASL) are Cytoplasmic-facing. A Phosphoserine; by CPK modification is found at Ser-7. Residues 25-44 (AEFASTFIFVFAGEGSGLAL) form a helical membrane-spanning segment. Over 45–57 (VKIYQDSAFSAGE) the chain is Vacuolar. The helical transmembrane segment at 58-77 (LLALALAHAFALFAAVSASM) threads the bilayer. Over 78–102 (HVSGGHVNPAVSFGALIGGRISVIR) the chain is Cytoplasmic. Residues 85-87 (NPA) carry the NPA 1 motif. Residues 103-121 (AVYYWIAQLLGSIVAALVL) traverse the membrane as a helical segment. The Vacuolar portion of the chain corresponds to 122 to 143 (RLVTNNMRPSGFHVSPGVGVGH). Residues 144-164 (MFILEVVMTFGLMYTVYGTAI) traverse the membrane as a helical segment. Topologically, residues 165–169 (DPKRG) are cytoplasmic. Residues 170–189 (AVSYIAPLAIGLIVGANILV) traverse the membrane as a helical segment. Residues 190 to 216 (GGPFDGACMNPALAFGPSLVGWQWHQH) are Vacuolar-facing. The NPA 2 signature appears at 199 to 201 (NPA). A helical transmembrane segment spans residues 217–239 (WIFWVGPLLGAALAALVYEYAVI). The Cytoplasmic segment spans residues 240–256 (PIEPPPHHHQPLATEDY).

This sequence belongs to the MIP/aquaporin (TC 1.A.8) family. TIP (TC 1.A.8.10) subfamily. Phosphorylated by a tonoplast-bound calcium-dependent protein kinase. In terms of tissue distribution, found in all seed tissues that are alive at seed maturity, but not in tissues that lose viability during seed maturation.

Its subcellular location is the vacuole membrane. Its function is as follows. Channel protein in tonoplast. These proteins may allow the diffusion of amino acids and/or peptides from the vacuolar compartment to the cytoplasm. The sequence is that of Probable aquaporin TIP-type alpha from Phaseolus vulgaris (Kidney bean).